A 304-amino-acid polypeptide reads, in one-letter code: Thiosulfate sulfurtransferase TUM1 (304 aa).

Rhodanese domains are found at residues 20–137 and 177–299; these read KVHR…PLDS and LAKK…PEWI. A compositionally biased stretch (basic and acidic residues) spans 191–201; sequence RFEGTEPEPRS. Positions 191 to 222 are disordered; it reads RFEGTEPEPRSDIPSGHIPGTQPLPYGSLLDP. Phosphoserine is present on Ser-201. Cys-259 serves as the catalytic Cysteine persulfide intermediate. A Phosphoserine modification is found at Ser-264.

The protein localises to the mitochondrion. Its subcellular location is the cytoplasm. It carries out the reaction thiosulfate + hydrogen cyanide = thiocyanate + sulfite + 2 H(+). Its function is as follows. Sulfur transferase that accepts persulfite from NFS1 and transfers it to UBA4 in the pathway for 2-thiolation of the wobble uridine base of tRNAs. Stimulates sulfur transfer by NFS1. Involved in metabolism of sterol esters in a tRNA thiolation pathway-independent manner. The sequence is that of Thiosulfate sulfurtransferase TUM1 from Saccharomyces cerevisiae (strain ATCC 204508 / S288c) (Baker's yeast).